The following is a 288-amino-acid chain: Formamidopyrimidine-DNA glycosylase (288 aa).

The active-site Schiff-base intermediate with DNA is proline 2. The active-site Proton donor is glutamate 3. The active-site Proton donor; for beta-elimination activity is lysine 58. Histidine 99, arginine 118, and lysine 161 together coordinate DNA. An FPG-type zinc finger spans residues 252–288 (RVYDREAEPCPREGCGGTIKRIVQAGRSTFFCAKCQR). Arginine 278 serves as the catalytic Proton donor; for delta-elimination activity.

It belongs to the FPG family. Monomer. Requires Zn(2+) as cofactor.

The enzyme catalyses Hydrolysis of DNA containing ring-opened 7-methylguanine residues, releasing 2,6-diamino-4-hydroxy-5-(N-methyl)formamidopyrimidine.. The catalysed reaction is 2'-deoxyribonucleotide-(2'-deoxyribose 5'-phosphate)-2'-deoxyribonucleotide-DNA = a 3'-end 2'-deoxyribonucleotide-(2,3-dehydro-2,3-deoxyribose 5'-phosphate)-DNA + a 5'-end 5'-phospho-2'-deoxyribonucleoside-DNA + H(+). Its function is as follows. Involved in base excision repair of DNA damaged by oxidation or by mutagenic agents. Acts as a DNA glycosylase that recognizes and removes damaged bases. Has a preference for oxidized purines, such as 7,8-dihydro-8-oxoguanine (8-oxoG). Has AP (apurinic/apyrimidinic) lyase activity and introduces nicks in the DNA strand. Cleaves the DNA backbone by beta-delta elimination to generate a single-strand break at the site of the removed base with both 3'- and 5'-phosphates. The protein is Formamidopyrimidine-DNA glycosylase of Beijerinckia indica subsp. indica (strain ATCC 9039 / DSM 1715 / NCIMB 8712).